Here is a 286-residue protein sequence, read N- to C-terminus: NADPH-dependent 7-cyano-7-deazaguanine reductase (286 aa).

A substrate-binding site is contributed by 92–94 (IES). An NADPH-binding site is contributed by 94–95 (SK). Cysteine 194 functions as the Thioimide intermediate in the catalytic mechanism. Aspartate 201 serves as the catalytic Proton donor. 233-234 (HE) serves as a coordination point for substrate. Position 262-263 (262-263 (RG)) interacts with NADPH.

The protein belongs to the GTP cyclohydrolase I family. QueF type 2 subfamily. Homodimer.

It is found in the cytoplasm. It carries out the reaction 7-aminomethyl-7-carbaguanine + 2 NADP(+) = 7-cyano-7-deazaguanine + 2 NADPH + 3 H(+). It functions in the pathway tRNA modification; tRNA-queuosine biosynthesis. Catalyzes the NADPH-dependent reduction of 7-cyano-7-deazaguanine (preQ0) to 7-aminomethyl-7-deazaguanine (preQ1). The chain is NADPH-dependent 7-cyano-7-deazaguanine reductase from Shewanella oneidensis (strain ATCC 700550 / JCM 31522 / CIP 106686 / LMG 19005 / NCIMB 14063 / MR-1).